We begin with the raw amino-acid sequence, 469 residues long: MTSQLHKKGEAWSARFSEPMSELVKRYTSSVFFDKRLALVDIAGSLAHASMLAAQKIISADDLAAIERGMAQIKGEIERGEFEWQLDLEDVHLNIEARLTALIGDAGKRLHTGRSRNDQVATDIRLWLRGEIDRIGGLLNDLRGALLDLAEQNADTIMPGFTHLQVAQPVTFGHHLLAYVEMFTRDAQRMRDCRTRVNRLPLGAAALAGTSYPIDRHAVAKTLGFDGICANSLDAVSDRDFAIEFTAASALVMTHVSRFSEELVLWMSPRVGFIDIADRFCTGSSIMPQKKNPDVPELARGKTGRVNGHLMALLTLMKGQPLAYNKDNQEDKEPLFDTVDTVADTLRIFAEMVAGITVKPDAMRAAALQGFSTATDLADYLVKRGLPFRDAHEAVAHAVRICDDRGIDLADLTLDEMKQELPNVAHLIGDDVFGYLTLEGSVASRNHPGGTAPDQVRAAIKAARAALGE.

This sequence belongs to the lyase 1 family. Argininosuccinate lyase subfamily.

The protein resides in the cytoplasm. The enzyme catalyses 2-(N(omega)-L-arginino)succinate = fumarate + L-arginine. It functions in the pathway amino-acid biosynthesis; L-arginine biosynthesis; L-arginine from L-ornithine and carbamoyl phosphate: step 3/3. In Burkholderia vietnamiensis (strain G4 / LMG 22486) (Burkholderia cepacia (strain R1808)), this protein is Argininosuccinate lyase.